A 792-amino-acid polypeptide reads, in one-letter code: Endonuclease MutS2 (792 aa).

ATP is bound at residue 344 to 351 (GPNTGGKT). Residues 716 to 791 (IHLRGLHVEE…GLGVTVVYLE (76 aa)) enclose the Smr domain.

The protein belongs to the DNA mismatch repair MutS family. MutS2 subfamily. Homodimer. Binds to stalled ribosomes, contacting rRNA.

Functionally, endonuclease that is involved in the suppression of homologous recombination and thus may have a key role in the control of bacterial genetic diversity. Acts as a ribosome collision sensor, splitting the ribosome into its 2 subunits. Detects stalled/collided 70S ribosomes which it binds and splits by an ATP-hydrolysis driven conformational change. Acts upstream of the ribosome quality control system (RQC), a ribosome-associated complex that mediates the extraction of incompletely synthesized nascent chains from stalled ribosomes and their subsequent degradation. Probably generates substrates for RQC. This chain is Endonuclease MutS2, found in Thermomicrobium roseum (strain ATCC 27502 / DSM 5159 / P-2).